The following is a 651-amino-acid chain: Bromodomain-containing protein 7 (651 aa).

2 disordered regions span residues Glu36–Gln133 and Lys257–Asp298. Positions His58 to Gly69 are enriched in basic residues. Positions Lys65 to His96 match the Nuclear localization signal motif. The segment covering Glu70 to Leu105 has biased composition (basic and acidic residues). The region spanning Val131–Glu235 is the Bromo domain. Basic and acidic residues predominate over residues Gly271–Asp298. Residues Ser533–Lys564 are a coiled coil.

It localises to the nucleus. Its subcellular location is the chromosome. Its function is as follows. Acts both as coactivator and as corepressor. May play a role in chromatin remodeling. Participates in the Wnt signaling pathway. Transcriptional corepressor that down-regulates the expression of target genes. Binds to target promoters, leading to increased histone H3 acetylation. Coactivator for TP53-mediated activation of transcription of a set of target genes. Required for TP53-mediated cell-cycle arrest in response to oncogene activation. Inhibits cell cycle progression from G1 to S phase. The sequence is that of Bromodomain-containing protein 7 (BRD7) from Gallus gallus (Chicken).